The primary structure comprises 130 residues: Transcription antitermination protein NusB (130 aa).

The protein belongs to the NusB family.

Involved in transcription antitermination. Required for transcription of ribosomal RNA (rRNA) genes. Binds specifically to the boxA antiterminator sequence of the ribosomal RNA (rrn) operons. The sequence is that of Transcription antitermination protein NusB from Macrococcus caseolyticus (strain JCSC5402) (Macrococcoides caseolyticum).